Consider the following 290-residue polypeptide: 4-hydroxy-tetrahydrodipicolinate synthase (290 aa).

Residue threonine 44 coordinates pyruvate. Residue tyrosine 132 is the Proton donor/acceptor of the active site. Residue lysine 160 is the Schiff-base intermediate with substrate of the active site. Isoleucine 202 is a pyruvate binding site.

It belongs to the DapA family. As to quaternary structure, homotetramer; dimer of dimers.

It localises to the cytoplasm. The enzyme catalyses L-aspartate 4-semialdehyde + pyruvate = (2S,4S)-4-hydroxy-2,3,4,5-tetrahydrodipicolinate + H2O + H(+). The protein operates within amino-acid biosynthesis; L-lysine biosynthesis via DAP pathway; (S)-tetrahydrodipicolinate from L-aspartate: step 3/4. Catalyzes the condensation of (S)-aspartate-beta-semialdehyde [(S)-ASA] and pyruvate to 4-hydroxy-tetrahydrodipicolinate (HTPA). This Legionella pneumophila (strain Corby) protein is 4-hydroxy-tetrahydrodipicolinate synthase.